The primary structure comprises 439 residues: Guanine deaminase (439 aa).

The Zn(2+) site is built by His82 and His84. Substrate is bound by residues 84–87, 209–210, 237–240, and Asp327; these read HYPQ, RF, and HLCE. 2 residues coordinate Zn(2+): His237 and Asp327.

This sequence belongs to the metallo-dependent hydrolases superfamily. ATZ/TRZ family. It depends on Zn(2+) as a cofactor.

It carries out the reaction guanine + H2O + H(+) = xanthine + NH4(+). It functions in the pathway purine metabolism; guanine degradation; xanthine from guanine: step 1/1. In terms of biological role, catalyzes the hydrolytic deamination of guanine, producing xanthine and ammonia. This is Guanine deaminase (guaD) from Escherichia coli (strain K12).